A 474-amino-acid chain; its full sequence is 3-isopropylmalate dehydratase large subunit (474 aa).

[4Fe-4S] cluster is bound by residues Cys-353, Cys-414, and Cys-417.

The protein belongs to the aconitase/IPM isomerase family. LeuC type 1 subfamily. As to quaternary structure, heterodimer of LeuC and LeuD. Requires [4Fe-4S] cluster as cofactor.

It catalyses the reaction (2R,3S)-3-isopropylmalate = (2S)-2-isopropylmalate. It functions in the pathway amino-acid biosynthesis; L-leucine biosynthesis; L-leucine from 3-methyl-2-oxobutanoate: step 2/4. In terms of biological role, catalyzes the isomerization between 2-isopropylmalate and 3-isopropylmalate, via the formation of 2-isopropylmaleate. This chain is 3-isopropylmalate dehydratase large subunit, found in Pseudomonas aeruginosa (strain LESB58).